The chain runs to 703 residues: Meiotic coiled-coil protein 2 (703 aa).

Composition is skewed to polar residues over residues 1-19 and 245-258; these read MQSI…SISE and TNVR…STPL. 3 disordered regions span residues 1 to 29, 245 to 265, and 284 to 309; these read MQSI…SELN, TNVR…DVDL, and ASTN…RSSS. The 356-residue stretch at 331 to 686 folds into the PUM-HD domain; it reads NPSVIPESTS…KVAYLVEKWN (356 aa). Pumilio repeat units lie at residues 361 to 396, 397 to 432, 433 to 468, 469 to 504, 509 to 544, 545 to 580, 581 to 616, and 625 to 660; these read NVII…NIVD, SIIS…QMGS, AMLG…AMMD, ELFL…NVMN, ALRG…ECIE, EIIF…RVID, ALLN…LYLK, and RTRQ…LVIT.

This Schizosaccharomyces pombe (strain 972 / ATCC 24843) (Fission yeast) protein is Meiotic coiled-coil protein 2 (mcp2).